Here is a 224-residue protein sequence, read N- to C-terminus: Small ribosomal subunit protein uS3 (224 aa).

The region spanning 38–106 (LREFVKEKLG…EVYLNVVEVR (69 aa)) is the KH type-2 domain.

This sequence belongs to the universal ribosomal protein uS3 family. As to quaternary structure, part of the 30S ribosomal subunit. Forms a tight complex with proteins S10 and S14.

In terms of biological role, binds the lower part of the 30S subunit head. Binds mRNA in the 70S ribosome, positioning it for translation. In Anaeromyxobacter dehalogenans (strain 2CP-1 / ATCC BAA-258), this protein is Small ribosomal subunit protein uS3.